An 86-amino-acid chain; its full sequence is Putative membrane protein insertion efficiency factor (86 aa).

It belongs to the UPF0161 family.

The protein resides in the cell inner membrane. Could be involved in insertion of integral membrane proteins into the membrane. This Pseudomonas aeruginosa (strain UCBPP-PA14) protein is Putative membrane protein insertion efficiency factor.